The following is an 875-amino-acid chain: Serrate RNA effector molecule homolog (875 aa).

The disordered stretch occupies residues 1–90; it reads MGDSDDEYDR…RRDWDEHSSD (90 aa). G2 is modified (N-acetylglycine). S4 is modified (phosphoserine). The residue at position 8 (Y8) is a Phosphotyrosine. The span at 8 to 73 shows a compositional bias: basic and acidic residues; sequence YDRRRRDKFR…ERFSPPRHEL (66 aa). A phosphoserine mark is found at S67, S74, and S136. K150 is covalently cross-linked (Glycyl lysine isopeptide (Lys-Gly) (interchain with G-Cter in SUMO2)). The tract at residues 272–411 is disordered; the sequence is EEEEQAGKTG…KPKDAAGLEC (140 aa). The segment covering 297 to 345 has biased composition (basic and acidic residues); that stretch reads EGERKANDKDEKKEDGKQAENDSSNDDKTKKSEGDGDKEEKKEEAEKEA. Over residues 369-386 the composition is skewed to acidic residues; it reads SESESEGGQAEEEKEEAE. Residues 387 to 411 show a composition bias toward basic and acidic residues; the sequence is EALKEKEKPKEEEKEKPKDAAGLEC. Phosphoserine occurs at positions 492 and 539. A Phosphothreonine modification is found at T543. S569 is modified (phosphoserine). Positions 571-597 are disordered; it reads EEEELLGSSGGPPPEEPPKEGNPAEIN. Position 670 is a phosphothreonine (T670). S678 bears the Phosphoserine mark. An omega-N-methylarginine mark is found at R832, R839, and R849. The interval 834–853 is disordered; sequence NYDAFRGQGGYPGKPRNRMV.

This sequence belongs to the ARS2 family. As to quaternary structure, interacts with CASP8AP2 and ERBB4. Interacts with NCBP1/CBP80 and DROSHA. Interacts with LUZP4. Interacts with NCBP2/CBP20 and NCBP3. Interacts with MTREX. In terms of tissue distribution, widely expressed, with a preference for proliferating cells. Highly expressed in hematopoietic tissues and reduced or absent expression in parenchymal organs like liver and kidney. In the brain, expressed in the subventricular zone by niche astrocytes, ependymal cells and neural stem cells. In this cerebral context, expressed in slowly dividing cells.

It localises to the nucleus. The protein localises to the nucleoplasm. Its subcellular location is the cytoplasm. Its function is as follows. Acts as a mediator between the cap-binding complex (CBC) and the primary microRNAs (miRNAs) processing machinery during cell proliferation. Contributes to the stability and delivery of capped primary miRNA transcripts to the primary miRNA processing complex containing DGCR8 and DROSHA, thereby playing a role in RNA-mediated gene silencing (RNAi) by miRNAs. Binds capped RNAs (m7GpppG-capped RNA); however interaction is probably mediated via its interaction with NCBP1/CBP80 component of the CBC complex. Involved in cell cycle progression at S phase. Does not directly confer arsenite resistance but rather modulates arsenic sensitivity. Independently of its activity on miRNAs, necessary and sufficient to promote neural stem cell self-renewal. Does so by directly binding SOX2 promoter and positively regulating its transcription. The sequence is that of Serrate RNA effector molecule homolog (Srrt) from Mus musculus (Mouse).